An 80-amino-acid chain; its full sequence is Large ribosomal subunit protein bL31 (80 aa).

The Zn(2+) site is built by Cys16, Cys18, Cys36, and Cys39.

It belongs to the bacterial ribosomal protein bL31 family. Type A subfamily. Part of the 50S ribosomal subunit. Zn(2+) serves as cofactor.

Functionally, binds the 23S rRNA. This is Large ribosomal subunit protein bL31 from Methylacidiphilum infernorum (isolate V4) (Methylokorus infernorum (strain V4)).